Consider the following 277-residue polypeptide: Protein OPG166 (277 aa).

Asparagine 29 and asparagine 58 each carry an N-linked (GlcNAc...) asparagine; by host glycan. 5 helical membrane-spanning segments follow: residues threonine 124 to tyrosine 144, glycine 156 to phenylalanine 176, isoleucine 186 to serine 206, leucine 219 to leucine 239, and leucine 247 to valine 267.

It belongs to the orthopoxvirus OPG166 protein family.

Its subcellular location is the host membrane. In terms of biological role, promotes, when overexpressed, the influx of extracellular Ca(2+), leading to membrane permeability and host cell necrosis. This chain is Protein OPG166 (OPG166), found in Cynomys gunnisoni (Gunnison's prairie dog).